Reading from the N-terminus, the 203-residue chain is V-type ATP synthase subunit D (203 aa).

This sequence belongs to the V-ATPase D subunit family.

Its function is as follows. Produces ATP from ADP in the presence of a proton gradient across the membrane. In Chlamydia trachomatis serovar L2 (strain ATCC VR-902B / DSM 19102 / 434/Bu), this protein is V-type ATP synthase subunit D.